A 149-amino-acid polypeptide reads, in one-letter code: Transcription factor Atoh7 (149 aa).

Positions 41–93 constitute a bHLH domain; it reads RRRLAANARERRRMQGLNTAFDRLRRVVPQWGQDKKLSKYETLQMALSYIIAL.

Forms a heterodimer with TCF3 isoform E47; interaction may be required for DNA-binding in certain situations. Expressed in retinal ganglion cells. Expressed in the cerebellum, trapezoid body, ventral nucleus of the lateral lamniscus and in areas of the auditory hindbrain such as the cochlear nucleus, lateral superior olive and medial nucleus of the trapezoid body. Expressed in the modiolar nerve root and in the cochlear in a small group of bushy neurons within the acoustic nerve. Expressed weakly in the sensory epithelia of the saccule and utricle.

The protein localises to the nucleus. It is found in the perikaryon. Its subcellular location is the cell projection. The protein resides in the axon. Functionally, transcription factor that binds to DNA at the consensus sequence 5'-CAG[GC]TG-3'. Dimerization with TCF3 isoform E47 may be required in certain situations. Binds to gene promoters and enhancer elements, and thereby regulates a transcriptional program of retinal ganglion cell (RGC) determinant genes. Although the exact mechanism is not certain, retinal transcription regulation by ATOH7 has a role in RGC determination and survival, photoreceptor population development, targeting of RGC axons to the optic nerve and development of the retino-hypothalamic tract. Binds to its own promoter and enhancer sequences, suggesting autoregulation of ATOH7 transcription. Required for retinal circadian rhythm photoentrainment. Plays a role in brainstem auditory signaling and binaural processing. This chain is Transcription factor Atoh7, found in Mus musculus (Mouse).